A 632-amino-acid polypeptide reads, in one-letter code: tRNA uridine 5-carboxymethylaminomethyl modification enzyme MnmG (632 aa).

FAD is bound by residues 13–18 (GGGHAG), valine 125, and serine 180. NAD(+) is bound at residue 273-287 (GPRYCPSIEDKVMRF). Glutamine 370 lines the FAD pocket.

It belongs to the MnmG family. In terms of assembly, homodimer. Heterotetramer of two MnmE and two MnmG subunits. The cofactor is FAD.

It is found in the cytoplasm. Its function is as follows. NAD-binding protein involved in the addition of a carboxymethylaminomethyl (cmnm) group at the wobble position (U34) of certain tRNAs, forming tRNA-cmnm(5)s(2)U34. This is tRNA uridine 5-carboxymethylaminomethyl modification enzyme MnmG from Proteus mirabilis (strain HI4320).